We begin with the raw amino-acid sequence, 277 residues long: Energy-coupling factor transporter ATP-binding protein EcfA1 (277 aa).

An ABC transporter domain is found at 4–238 (IETKNLNYSY…SELLSKNDLK (235 aa)). 38-45 (GKNGSGKS) serves as a coordination point for ATP.

This sequence belongs to the ABC transporter superfamily. Energy-coupling factor EcfA family. As to quaternary structure, forms a stable energy-coupling factor (ECF) transporter complex composed of 2 membrane-embedded substrate-binding proteins (S component), 2 ATP-binding proteins (A component) and 2 transmembrane proteins (T component).

It localises to the cell membrane. In terms of biological role, ATP-binding (A) component of a common energy-coupling factor (ECF) ABC-transporter complex. Unlike classic ABC transporters this ECF transporter provides the energy necessary to transport a number of different substrates. This is Energy-coupling factor transporter ATP-binding protein EcfA1 from Oenococcus oeni (strain ATCC BAA-331 / PSU-1).